Reading from the N-terminus, the 423-residue chain is Growth hormone-releasing hormone receptor (423 aa).

The N-terminal stretch at 1–22 (MDSGVWAACIFCLLSSLPVALG) is a signal peptide. Residues 23–130 (HVHPECDFIT…DEKSYFSTVR (108 aa)) are Extracellular-facing. 3 cysteine pairs are disulfide-bonded: Cys41–Cys64, Cys55–Cys96, and Cys78–Cys112. A glycan (N-linked (GlcNAc...) asparagine) is linked at Asn50. The chain crosses the membrane as a helical span at residues 131–151 (IVYTTGHSVSAVALFVAIAIL). Residues 152-167 (VALRRLHCPRNYIHSQ) are Cytoplasmic-facing. Residues 168-188 (LFATFILKAGAVFLKDAALFH) traverse the membrane as a helical segment. The Extracellular portion of the chain corresponds to 189–210 (SENTDHCSFSTVLCKVSVATSH). Residues 211–231 (FATMTNFSWLLAEAVYLTCLL) form a helical membrane-spanning segment. Topologically, residues 232–240 (ASTSPSTRR) are cytoplasmic. The helical transmembrane segment at 241-261 (AFWWLVLAGWGLPLLFTGTWV) threads the bilayer. Over 262-283 (GCKLAFEDVACWDLDDSSPYWW) the chain is Extracellular. A helical membrane pass occupies residues 284–304 (IIKGPIVLSVGVNFGLFLNII). Residues 305–331 (RILLRKLEPAQGSLHTQPQYWRLSKST) are Cytoplasmic-facing. A helical transmembrane segment spans residues 332-352 (LLLIPLFGIHYVIFNFLPDSA). Residues 353 to 357 (GLGIR) lie on the Extracellular side of the membrane. Residues 358-378 (LPLELGLGSFQGFIVAILYCF) form a helical membrane-spanning segment. At 379 to 423 (LNQEVRTEISRRWHGHDPELLPAWRTHAKWAKPSRSRAKVLTTVC) the chain is on the cytoplasmic side.

It belongs to the G-protein coupled receptor 2 family. Pituitary gland. Also detected in the lymphocytes and thymocytes.

It localises to the cell membrane. Receptor for GRF, coupled to G proteins which activate adenylyl cyclase. Stimulates somatotroph cell growth, growth hormone gene transcription and growth hormone secretion. The polypeptide is Growth hormone-releasing hormone receptor (GHRHR) (Sus scrofa (Pig)).